The following is a 236-amino-acid chain: uncharacterized protein (236 aa).

This is an uncharacterized protein from Aquifex aeolicus (strain VF5).